A 174-amino-acid polypeptide reads, in one-letter code: GLVGAPATLSTAPIAYGGYGGYGAYGGSLLRAAPIARVASPLAYAAPVARVAAPLAYAAPYARAAVAAPVAVAKTVVADEYDPNPQYSFGYDVQDGLTGDSKNQVESRSGDVVQGSYSLVDPDGTRRTVEYTADPINGFNAVVHREPLVAKAVVAAPAIAKVHAPLAYSGGYLH.

A run of 2 repeats spans residues 45–48 (AAPV) and 67–70 (AAPV). The 67-residue stretch at 84–150 (NPQYSFGYDV…AVVHREPLVA (67 aa)) folds into the Chitin-binding type R&amp;R domain. Repeat unit 3 spans residues 155–158 (AAPA).

Component of the cuticle of the larva of Tenebrio molitor. The protein is Larval cuticle protein A1A of Tenebrio molitor (Yellow mealworm beetle).